The chain runs to 348 residues: NFSTPLNEHEEVSYESAGYTVLQILPLVVLGVTFVLGVLGNGLVIWVAGFRMTRTVTTICYLNLPLADFSFTATLPFLIVSMAMGEKWPFGWFLCKLIHIVVDINLFGSVFLIGFIALDRCICVLHPVWAQNHRTVSLAMKVIIGPWILALVLTLPVFLFLTTVTIPNGDTYCTFNFASWGGTPEERKNVAITMLTARGIIRFVIGFSMPMSIVAICYGLIAAKIHKKGMIKSSRPLRVLTAVVASFFICWFPFQLVALLSTVWLKEMLFYGKYKIINILVNPTSSLAFFNSCLNPMLYVFVGQDFRERLIRSLPTSLERALSEDSAPTNDTAAKCASPPAETELQAM.

Residue Asn-1 is glycosylated (N-linked (GlcNAc...) asparagine). At Asn-1–Ile-24 the chain is on the extracellular side. The chain crosses the membrane as a helical span at residues Leu-25–Val-47. The Cytoplasmic portion of the chain corresponds to Ala-48–Thr-58. A helical transmembrane segment spans residues Ile-59 to Val-80. Topologically, residues Ser-81 to Leu-97 are extracellular. A disulfide bridge connects residues Cys-95 and Cys-173. Residues Ile-98–Leu-118 form a helical membrane-spanning segment. The Cytoplasmic segment spans residues Asp-119–Ser-137. The chain crosses the membrane as a helical span at residues Leu-138 to Leu-159. At Phe-160–Arg-202 the chain is on the extracellular side. Residues Phe-203–Ala-223 form a helical membrane-spanning segment. Residues Lys-224 to Val-239 lie on the Cytoplasmic side of the membrane. A helical membrane pass occupies residues Leu-240–Val-263. The Extracellular portion of the chain corresponds to Trp-264–Pro-283. The helical transmembrane segment at Thr-284 to Gly-303 threads the bilayer. Over Gln-304 to Met-348 the chain is Cytoplasmic. Positions Ser-323–Met-348 are disordered.

Belongs to the G-protein coupled receptor 1 family. In terms of assembly, interacts with APP; the interaction takes place at the cell surface and the complex is then rapidly internalized.

It is found in the cell membrane. Functionally, low affinity receptor for N-formyl-methionyl peptides, which are powerful neutrophil chemotactic factors. Binding of FMLP to the receptor causes activation of neutrophils. This response is mediated via a G-protein that activates a phosphatidylinositol-calcium second messenger system. Receptor for the chemokine-like protein FAM19A5, mediating FAM19A5-stimulated macrophage chemotaxis and the inhibitory effect on TNFSF11/RANKL-induced osteoclast differentiation. In Pongo pygmaeus (Bornean orangutan), this protein is N-formyl peptide receptor 2 (FPR2).